The sequence spans 358 residues: G-protein coupled receptor 62 (358 aa).

Residues 1–17 (MANGSGLSVTELAGSVG) are Extracellular-facing. The N-linked (GlcNAc...) asparagine glycan is linked to Asn-3. The helical transmembrane segment at 18–38 (FILAVLVEVGAVLGNGTLLVV) threads the bilayer. Residues 39–53 (VLRTPDLQDAFYLAH) are Cytoplasmic-facing. The chain crosses the membrane as a helical span at residues 54–74 (LCVVDLLAAASIMPLGLLAAP). Residues 75-89 (PGLGTVPLDPSSCRA) are Extracellular-facing. A helical membrane pass occupies residues 90–110 (ARFLSAALLPACTLGVAALGL). The Cytoplasmic segment spans residues 111 to 128 (ARYRLIVHPLRPGARPAP). A helical membrane pass occupies residues 129–149 (ALVLTAVWSAAALLGALSLLG). Over 150 to 176 (PPPAPPPAPARCSVLAGGLGPFRPLWA) the chain is Extracellular. A helical membrane pass occupies residues 177-197 (MLAFALPALLLLAAYGSIFLV). At 198–234 (ARRAALRPPRGTRPRSDSLDSRLSFLPPLRPRLLGGK) the chain is on the cytoplasmic side. The chain crosses the membrane as a helical span at residues 235-255 (AALAPALAVGQFAACWLPYGC). The Extracellular portion of the chain corresponds to 256 to 268 (ACLAPAARAAAAE). A helical transmembrane segment spans residues 269–289 (ATVTWVAYSAFAAHPFLYGLL). Over 290–358 (QRPVRLALGR…RQTPSVSEAT (69 aa)) the chain is Cytoplasmic. Residues 334-358 (VLGPSEAPEQARELARQTPSVSEAT) form a disordered region.

It belongs to the G-protein coupled receptor 1 family. In terms of assembly, homodimer. Forms heterodimer with MTNR1B. Interacts with ARRB1 and ARRB2 in a spontaneous and agonist-independent manner; leading to the internalization of GPR62 in the endosomal compartment. As to expression, expressed in the brain and testes. Expressed widely, in the brain, including the cerebral cortex, cerebellum, hippocampus,thalamus and pituitary gland. In the testes, expressed specifically in the germ cells.

It is found in the cell membrane. It localises to the endosome membrane. Its function is as follows. Orphan G-protein coupled receptor. Constitutively activates the G(q/11)/inositol phosphate and the G(s)-alpha/cAMP signaling pathways. Has spontaneous activity for beta-arrestin recruitment. Shows a reciprocal regulatory interaction with the melatonin receptor MTNR1B most likely through receptor heteromerization. In Mus musculus (Mouse), this protein is G-protein coupled receptor 62 (Gpr62).